The primary structure comprises 105 residues: Small ribosomal subunit protein uS10 (105 aa).

This sequence belongs to the universal ribosomal protein uS10 family. As to quaternary structure, part of the 30S ribosomal subunit.

Involved in the binding of tRNA to the ribosomes. The sequence is that of Small ribosomal subunit protein uS10 from Crocosphaera subtropica (strain ATCC 51142 / BH68) (Cyanothece sp. (strain ATCC 51142)).